A 272-amino-acid polypeptide reads, in one-letter code: Phosphoglycolate phosphatase (272 aa).

The Nucleophile role is filled by D19. 3 residues coordinate Mg(2+): D19, D21, and D182.

This sequence belongs to the HAD-like hydrolase superfamily. CbbY/CbbZ/Gph/YieH family. The cofactor is Mg(2+).

It catalyses the reaction 2-phosphoglycolate + H2O = glycolate + phosphate. The protein operates within organic acid metabolism; glycolate biosynthesis; glycolate from 2-phosphoglycolate: step 1/1. Specifically catalyzes the dephosphorylation of 2-phosphoglycolate. Is involved in the dissimilation of the intracellular 2-phosphoglycolate formed during the DNA repair of 3'-phosphoglycolate ends, a major class of DNA lesions induced by oxidative stress. This is Phosphoglycolate phosphatase from Pseudomonas fluorescens (strain Pf0-1).